The sequence spans 495 residues: Probable cytosol aminopeptidase (495 aa).

Mn(2+) contacts are provided by Lys258 and Asp263. Lys270 is a catalytic residue. Mn(2+) is bound by residues Asp281, Asp340, and Glu342. Arg344 is a catalytic residue.

The protein belongs to the peptidase M17 family. Requires Mn(2+) as cofactor.

It localises to the cytoplasm. It catalyses the reaction Release of an N-terminal amino acid, Xaa-|-Yaa-, in which Xaa is preferably Leu, but may be other amino acids including Pro although not Arg or Lys, and Yaa may be Pro. Amino acid amides and methyl esters are also readily hydrolyzed, but rates on arylamides are exceedingly low.. The enzyme catalyses Release of an N-terminal amino acid, preferentially leucine, but not glutamic or aspartic acids.. Its function is as follows. Presumably involved in the processing and regular turnover of intracellular proteins. Catalyzes the removal of unsubstituted N-terminal amino acids from various peptides. This chain is Probable cytosol aminopeptidase, found in Leptospira interrogans serogroup Icterohaemorrhagiae serovar copenhageni (strain Fiocruz L1-130).